We begin with the raw amino-acid sequence, 492 residues long: Glutamyl-tRNA(Gln) amidotransferase subunit A (492 aa).

Active-site charge relay system residues include Lys-78 and Ser-158. Ser-182 functions as the Acyl-ester intermediate in the catalytic mechanism.

This sequence belongs to the amidase family. GatA subfamily. In terms of assembly, heterotrimer of A, B and C subunits.

It catalyses the reaction L-glutamyl-tRNA(Gln) + L-glutamine + ATP + H2O = L-glutaminyl-tRNA(Gln) + L-glutamate + ADP + phosphate + H(+). Its function is as follows. Allows the formation of correctly charged Gln-tRNA(Gln) through the transamidation of misacylated Glu-tRNA(Gln) in organisms which lack glutaminyl-tRNA synthetase. The reaction takes place in the presence of glutamine and ATP through an activated gamma-phospho-Glu-tRNA(Gln). The polypeptide is Glutamyl-tRNA(Gln) amidotransferase subunit A (Rhodopseudomonas palustris (strain ATCC BAA-98 / CGA009)).